Reading from the N-terminus, the 195-residue chain is uncharacterized protein (195 aa).

The first 16 residues, 1 to 16, serve as a signal peptide directing secretion; sequence MIRTIIVFMLLTISFG.

This is an uncharacterized protein from Acanthamoeba polyphaga mimivirus (APMV).